Here is a 32-residue protein sequence, read N- to C-terminus: Cyclotide glopa A (32 aa).

Positions 1–32 form a cross-link, cyclopeptide (Gly-Asn); the sequence is GGSIPCIETCVWTGCFLVPGCSCKSDKKCYLN. 3 disulfide bridges follow: C6/C21, C10/C23, and C15/C29.

In terms of processing, this is a cyclic peptide.

Probably participates in a plant defense mechanism. The polypeptide is Cyclotide glopa A (Gloeospermum pauciflorum).